The chain runs to 398 residues: Enoyl-[acyl-carrier-protein] reductase [NADH] (398 aa).

Residues 48–53 (GASTGY), 74–75 (FE), 111–112 (DA), and 139–140 (LA) contribute to the NAD(+) site. Residue Tyr225 participates in substrate binding. The active-site Proton donor is Tyr235. Residues Lys244 and 273–275 (VVT) each bind NAD(+).

The protein belongs to the TER reductase family. As to quaternary structure, monomer.

The catalysed reaction is a 2,3-saturated acyl-[ACP] + NAD(+) = a (2E)-enoyl-[ACP] + NADH + H(+). The protein operates within lipid metabolism; fatty acid biosynthesis. In terms of biological role, involved in the final reduction of the elongation cycle of fatty acid synthesis (FAS II). Catalyzes the reduction of a carbon-carbon double bond in an enoyl moiety that is covalently linked to an acyl carrier protein (ACP). This is Enoyl-[acyl-carrier-protein] reductase [NADH] from Paraburkholderia phytofirmans (strain DSM 17436 / LMG 22146 / PsJN) (Burkholderia phytofirmans).